Reading from the N-terminus, the 248-residue chain is 2,3-bisphosphoglycerate-dependent phosphoglycerate mutase (248 aa).

Residues 8 to 15, 21 to 22, R60, 87 to 90, K98, 114 to 115, and 183 to 184 contribute to the substrate site; these read RHGESTWN, TG, ERHY, RR, and GN. H9 functions as the Tele-phosphohistidine intermediate in the catalytic mechanism. E87 (proton donor/acceptor) is an active-site residue.

Belongs to the phosphoglycerate mutase family. BPG-dependent PGAM subfamily. As to quaternary structure, homodimer.

The enzyme catalyses (2R)-2-phosphoglycerate = (2R)-3-phosphoglycerate. It participates in carbohydrate degradation; glycolysis; pyruvate from D-glyceraldehyde 3-phosphate: step 3/5. In terms of biological role, catalyzes the interconversion of 2-phosphoglycerate and 3-phosphoglycerate. This chain is 2,3-bisphosphoglycerate-dependent phosphoglycerate mutase, found in Burkholderia cenocepacia (strain ATCC BAA-245 / DSM 16553 / LMG 16656 / NCTC 13227 / J2315 / CF5610) (Burkholderia cepacia (strain J2315)).